We begin with the raw amino-acid sequence, 282 residues long: Biotin synthase (282 aa).

Residues 1 to 230 (MSDNKIYLCA…NQMLMIAGGR (230 aa)) enclose the Radical SAM core domain. 3 residues coordinate [4Fe-4S] cluster: cysteine 19, cysteine 23, and cysteine 26. The [2Fe-2S] cluster site is built by cysteine 63, cysteine 98, and cysteine 156.

Belongs to the radical SAM superfamily. Biotin synthase family. In terms of assembly, homodimer. [4Fe-4S] cluster is required as a cofactor. Requires [2Fe-2S] cluster as cofactor.

The catalysed reaction is (4R,5S)-dethiobiotin + (sulfur carrier)-SH + 2 reduced [2Fe-2S]-[ferredoxin] + 2 S-adenosyl-L-methionine = (sulfur carrier)-H + biotin + 2 5'-deoxyadenosine + 2 L-methionine + 2 oxidized [2Fe-2S]-[ferredoxin]. The protein operates within cofactor biosynthesis; biotin biosynthesis; biotin from 7,8-diaminononanoate: step 2/2. In terms of biological role, catalyzes the conversion of dethiobiotin (DTB) to biotin by the insertion of a sulfur atom into dethiobiotin via a radical-based mechanism. In Aliarcobacter butzleri (strain RM4018) (Arcobacter butzleri), this protein is Biotin synthase.